Reading from the N-terminus, the 833-residue chain is Capsid-associated protein Vp91 (833 aa).

An N-terminal signal peptide occupies residues 1-18 (MSGVVLLVLAIILITIFS). N-linked (GlcNAc...) asparagine; by host glycosylation is found at N137, N180, N199, and N210. Residues 147–196 (CVPEDPCSGRPPGRYPMNELLLDTLVHNQHSDKNYSAGAHLYHPTLYLRC) form a C2HC BV-type zinc finger. Cystine bridges form between C207–C220 and C260–C273. Positions 223 to 281 (NELCEGRPDGFVLPYFPEALLVNEFVECRNGEHVVAQCADGQVFDRALMTCVHAHPCAF) constitute a Chitin-binding type-2 domain. N408, N413, N588, and N609 each carry an N-linked (GlcNAc...) asparagine; by host glycan. The tract at residues 647–673 (EPGGDGDHWAPEVPPTQPEPELEPESE) is disordered.

The protein resides in the virion. Functionally, probable capsid-associated protein. The sequence is that of Capsid-associated protein Vp91 from Choristoneura fumiferana nuclear polyhedrosis virus (CfMNPV).